The following is a 344-amino-acid chain: MFSNLSNSEILNNLLEGRDLDDLTSRSLMQRWLNDKVSDVETGAFLSALRAKGSTGVELSSMAEELLNVCDLPVARPNLYLVDTCGTGGDGANTFNISTAVAFVAASCGVKIAKHGNKSASGKVGSADVLLNLGLNLNCSLEKVINAVNEIGITFLFAPVWHKSLIKLAPLRKTLGIRTVFNQLGPLVNPLRPNAQVLGVASEDFLKPMGSALLKMGMNRAIVVHGSGGLDEASLQGENKLVFVENGELRFSEINISDFNHENIANEKLVVSDFQSNDEILKSVLNGSGQKSHIDVVALNAALVLWVAGIEDDLNEGFNKALISINQGDPWKKFLLLKNYLSEN.

5-phospho-alpha-D-ribose 1-diphosphate contacts are provided by residues G86, 89–90, T94, 96–99, 114–122, and S126; these read GD, NIST, and KHGNKSASG. G86 is an anthranilate binding site. S98 provides a ligand contact to Mg(2+). Residue N117 participates in anthranilate binding. Residue R172 coordinates anthranilate. Mg(2+)-binding residues include D231 and E232.

Belongs to the anthranilate phosphoribosyltransferase family. As to quaternary structure, homodimer. It depends on Mg(2+) as a cofactor.

The enzyme catalyses N-(5-phospho-beta-D-ribosyl)anthranilate + diphosphate = 5-phospho-alpha-D-ribose 1-diphosphate + anthranilate. It participates in amino-acid biosynthesis; L-tryptophan biosynthesis; L-tryptophan from chorismate: step 2/5. Its function is as follows. Catalyzes the transfer of the phosphoribosyl group of 5-phosphorylribose-1-pyrophosphate (PRPP) to anthranilate to yield N-(5'-phosphoribosyl)-anthranilate (PRA). In Prochlorococcus marinus (strain MIT 9215), this protein is Anthranilate phosphoribosyltransferase.